The primary structure comprises 417 residues: Serine hydroxymethyltransferase (417 aa).

At lysine 54 the chain carries N6-acetyllysine. Residues leucine 121 and 125-127 (GHL) each bind (6S)-5,6,7,8-tetrahydrofolate. N6-(pyridoxal phosphate)lysine is present on lysine 229. An N6-acetyllysine mark is found at lysine 250, lysine 285, and lysine 354. 355-357 (SPF) provides a ligand contact to (6S)-5,6,7,8-tetrahydrofolate. Lysine 375 carries the N6-acetyllysine modification.

The protein belongs to the SHMT family. Homodimer. Pyridoxal 5'-phosphate serves as cofactor.

Its subcellular location is the cytoplasm. It carries out the reaction (6R)-5,10-methylene-5,6,7,8-tetrahydrofolate + glycine + H2O = (6S)-5,6,7,8-tetrahydrofolate + L-serine. Its pathway is one-carbon metabolism; tetrahydrofolate interconversion. It functions in the pathway amino-acid biosynthesis; glycine biosynthesis; glycine from L-serine: step 1/1. Functionally, catalyzes the reversible interconversion of serine and glycine with tetrahydrofolate (THF) serving as the one-carbon carrier. This reaction serves as the major source of one-carbon groups required for the biosynthesis of purines, thymidylate, methionine, and other important biomolecules. Also exhibits THF-independent aldolase activity toward beta-hydroxyamino acids, producing glycine and aldehydes, via a retro-aldol mechanism. This is Serine hydroxymethyltransferase from Shigella dysenteriae serotype 1 (strain Sd197).